The primary structure comprises 250 residues: tRNA (guanine-N(1)-)-methyltransferase (250 aa).

S-adenosyl-L-methionine contacts are provided by residues G115 and 135–140 (LGDFVL).

It belongs to the RNA methyltransferase TrmD family. Homodimer.

It is found in the cytoplasm. The enzyme catalyses guanosine(37) in tRNA + S-adenosyl-L-methionine = N(1)-methylguanosine(37) in tRNA + S-adenosyl-L-homocysteine + H(+). Functionally, specifically methylates guanosine-37 in various tRNAs. The protein is tRNA (guanine-N(1)-)-methyltransferase of Legionella pneumophila (strain Paris).